Here is a 428-residue protein sequence, read N- to C-terminus: Tryptophan synthase beta chain (428 aa).

N6-(pyridoxal phosphate)lysine is present on K92.

The protein belongs to the TrpB family. As to quaternary structure, tetramer of two alpha and two beta chains. It depends on pyridoxal 5'-phosphate as a cofactor.

It catalyses the reaction (1S,2R)-1-C-(indol-3-yl)glycerol 3-phosphate + L-serine = D-glyceraldehyde 3-phosphate + L-tryptophan + H2O. Its pathway is amino-acid biosynthesis; L-tryptophan biosynthesis; L-tryptophan from chorismate: step 5/5. Functionally, the beta subunit is responsible for the synthesis of L-tryptophan from indole and L-serine. The protein is Tryptophan synthase beta chain of Leptothrix cholodnii (strain ATCC 51168 / LMG 8142 / SP-6) (Leptothrix discophora (strain SP-6)).